The primary structure comprises 1893 residues: MMDSVLEEDVTVPGTLSGCSGLVPSVPDDLDGINPNAGLGNGVLPNVSEETVSPTRARNMKDFENQITELKKENFNLKLRIYFLEERMQQEFHGPTEHIYKTNIELKVEVESLKRELQEREQLLIKASKAVESLAEAGGSEIQRVKEDARKKVQQVEDLLTKRILLLEKDVTAAQAELEKAFAGTETEKALRLRLESKLSEMKKMHEGDLAMALVLDEKDRLIEELKLSLKSKEALIQCLKEEKSQMASPDENVSSGELRGLCAAPREEKXRETEAAQMEHQKERNSFEERIQALEEDLREKEREIATEKKNSLKRDKAIQGLTMALKSKEKXVEELNSEIEKLXAAFAKAREALQKAQTQEFQGSEDYETALSGKEALSAALRSQNLTKSTENHRLRRSIKKITQELSDLQQERERLEKDLEEAHREKSKGDCTIRDLRNEVEKLRNEVNEREKAMENRYKSLLSESNKKLHNQEQVVKHLTESTNQKDVLLQKFNEKDLEVIQQNHYLMAAEDLELRSESLITEKCSSQQPPGSKTIFSKEKKQSSDYEELIQVLKKEQDIYTHLVKSLQESDSINNLQAELNNIFALRKQLEQDVLSYQNLRKTLEEQISXIRRREEESFSLYSDQTSYLSICLEENNRFQVEHFSQEELKKKVSDLIQLVKELYTDNQHLKKTIFDLSCMGFQGNGFPDRLASTEQTELLASKEDEDTIKIGEDDEINFLSDEHLQQSNEIMKDLSKGGCKNGYLRHTESKISDCDGAHAPGCLEEGAFINLLAPLFNEKATLLLESRPDLLKVVRELLLGQLFLTEQEVSGEHLDGKTEKTPKQKGELVHFVQTNSFSKPHDELKLSCEAQLVKAGEVPKVGLKDASVQTVATEGDLLRFKHEATREAWEEKPINTALSAEHRPENLHGVPGWQAALLSLPGVTNREAKKSRLPILIKPSRSLGNMYRLPATQEVVTQLQSQILELQGELKEFKTCNKQLHQKLILAEAVMEGRPTPDKTLLNAQPPVGAAYQDSPGEQKGIKTTSSVWRDKEMDSDQQTSYEIDSEICPPDDLASLPSCKENPEDVLSPTSVATYLSSKSQPSAKVSVMGTDQSESINTSNETEYLKQKIHDLETELEAYQNFIFQLQKHSQCSEAIITVLCGTEGAQDGLSKPKSGSDGEEMTFSSLHQVRYVKHVKILGPLAPEMIDSRVLENLKQQLEEQEYKLQKEQNLNMQLFSEIHNLQNKFRDLSPPRYDSLVQSQARELSLQRQQIKDGHGICVISRQHMNTMIKAFEELLQASDVDYCVAEGFQEQLNQCAELLEKLEKLFLNGKSVGVEMNTQIELMERIEEDNLTYQHLLPESPEPSASHALSDYETSEKSFFSQDQKQDNETEKTSVMVNNFSQDLLMEHIQEIRTLRKRLEESIKTNEKLRKQLERQGSEFDQGSTNIFASGSELHSSLTSEIHFLRKQNQALNAMLIKGSRDKQKENDKLRESLSRKTVSLEHLQREYASVKEENERLQKEGSEKERHNQQLIQEVRCSGQELSRVQEEVKLRQQLLSQNDKLLQSLRVELKAYEKLDEEHRRLREASGEGWKGQDPFRDLHSLLMEIQALRLQLERSIETSSTLQGRLEEQLARGAEKAQEGALTLAVQAVSIPEVPLQLDKHDGDKYPMESDNSFDLFDSSQAVTPKSVSETPPLSGNDTDSLSCDSGSSATSTPCVSRLVTGHHLWASKNGRHVLGLIEDYEALLKQISQGQRLLAEMDVQTQEAPSSTSQELGTKGPHPAPLSKFVSSVSTAKLTLEEAYRRLKLLWRVSLPEDGQCPLHCEQIGEMKAEVTKLHKKLFEQEKKLQNTMKLLQLSKRQEKVIFDQLVVTHKILRKARGNLELRPGGSHPGTCSPSRPGS.

The segment at 51–94 (TVSPTRARNMKDFENQITELKKENFNLKLRIYFLEERMQQEFHG) is CM1 motif; interacts with the gTuRC. Residues 58-196 (RNMKDFENQI…TEKALRLRLE (139 aa)) are interaction with NCKAP5L. A Phosphoserine modification is found at Ser-547. The segment at 926–1208 (PGVTNREAKK…LENLKQQLEE (283 aa)) is interaction with MAPRE1. Residue Thr-1001 is modified to Phosphothreonine. Residues 1015–1071 (AAYQDSPGEQKGIKTTSSVWRDKEMDSDQQTSYEIDSEICPPDDLASLPSCKENPED) form a disordered region. Positions 1196 to 1893 (SRVLENLKQQ…GTCSPSRPGS (698 aa)) are interaction with PCNT and AKAP9. Residue Ser-1238 is modified to Phosphoserine. Disordered stretches follow at residues 1347 to 1381 (LPESPEPSASHALSDYETSEKSFFSQDQKQDNETE) and 1467 to 1486 (IKGSRDKQKENDKLRESLSR). A compositionally biased stretch (basic and acidic residues) spans 1469-1486 (GSRDKQKENDKLRESLSR). Ser-1490 is modified (phosphoserine). Over residues 1500 to 1519 (SVKEENERLQKEGSEKERHN) the composition is skewed to basic and acidic residues. Residues 1500–1521 (SVKEENERLQKEGSEKERHNQQ) are disordered. Residues Ser-1663 and Ser-1666 each carry the phosphoserine modification. Disordered regions lie at residues 1675 to 1706 (AVTPKSVSETPPLSGNDTDSLSCDSGSSATST) and 1752 to 1774 (DVQTQEAPSSTSQELGTKGPHPA). The tract at residues 1726 to 1768 (HVLGLIEDYEALLKQISQGQRLLAEMDVQTQEAPSSTSQELGT) is interaction with CDK5R1. The segment covering 1753-1766 (VQTQEAPSSTSQEL) has biased composition (polar residues). The interval 1861-1870 (VVTHKILRKA) is required for centrosomal attachment, Golgi localization and CALM1 interaction. Residues 1874–1893 (LELRPGGSHPGTCSPSRPGS) form a disordered region. Residues 1884-1893 (GTCSPSRPGS) show a composition bias toward polar residues. Ser-1893 carries the post-translational modification Phosphoserine.

Homodimer. Interacts with CDK5R1 (p35 form). CDK5RAP1, CDK5RAP2 and CDK5RAP3 show competitive binding to CDK5R1. May form a complex with CDK5R1 and CDK5. Interacts with pericentrin/PCNT; the interaction is leading to centrosomal and Golgi localization of CDK5RAP2 and PCNT. Interacts with AKAP9; the interaction targets CDK5RAP2 and AKAP9 to Golgi apparatus. Interacts with MAPRE1; the interaction is direct and targets CDK5RAP2 and EB1/MAPRE1 to microtubule plus ends. Interacts with TUBG1; the interaction is leading to the centrosomal localization of CDK5RAP2 and TUBG1. Interacts with TUBGCP3. Interacts with CALM1. Interacts with CDC20. Interacts with CEP68; degradation of CEP68 in early mitosis leads to removal of CDK5RAP2 from the centrosome which promotes centriole disengagement and subsequent centriole separation. Interacts with NCKAP5L. Forms a pericentrosomal complex with AKAP9, MAPRE1 and PDE4DIP isoform 13/MMG8/SMYLE; within this complex, MAPRE1 binding to CDK5RAP2 may be mediated by PDE4DIP. Interacts with LGALS3BP; this interaction may connect the pericentrosomal complex to the gamma-tubulin ring complex (gTuRC) to promote microtubule assembly and acetylation. Interacts with CCDC66. Associates (via CM1 motif) with TUBGCP2 of the gTuRC; the interaction plays a role in gTuRC activation. In terms of processing, phosphorylated in vitro by CDK5.

The protein resides in the cytoplasm. It localises to the cytoskeleton. The protein localises to the microtubule organizing center. It is found in the centrosome. Its subcellular location is the golgi apparatus. Its function is as follows. Potential regulator of CDK5 activity via its interaction with CDK5R1. Negative regulator of centriole disengagement (licensing) which maintains centriole engagement and cohesion. Involved in regulation of mitotic spindle orientation. Plays a role in the spindle checkpoint activation by acting as a transcriptional regulator of both BUBR1 and MAD2 promoter. Together with EB1/MAPRE1, may promote microtubule polymerization, bundle formation, growth and dynamics at the plus ends. Regulates centrosomal maturation by recruitment of the gamma-tubulin ring complex (gTuRC) onto centrosomes. In complex with PDE4DIP isoform 13/MMG8/SMYLE, MAPRE1 and AKAP9, contributes to microtubules nucleation and extension from the centrosome to the cell periphery. Required for the recruitment of AKAP9 to centrosomes. Plays a role in neurogenesis. The sequence is that of CDK5 regulatory subunit-associated protein 2 (CDK5RAP2) from Pan troglodytes (Chimpanzee).